The following is a 130-amino-acid chain: Transcription antitermination protein NusB (130 aa).

The protein belongs to the NusB family.

Its function is as follows. Involved in transcription antitermination. Required for transcription of ribosomal RNA (rRNA) genes. Binds specifically to the boxA antiterminator sequence of the ribosomal RNA (rrn) operons. The protein is Transcription antitermination protein NusB of Geobacillus kaustophilus (strain HTA426).